The following is a 30-amino-acid chain: Dendrotoxin B (30 aa).

Cys-3 and Cys-22 are disulfide-bonded.

Belongs to the three-finger toxin family. Short-chain subfamily. Orphan group XI sub-subfamily. Post-translationally, contains 4 disulfide bonds. Expressed by the venom gland.

Its subcellular location is the secreted. Its function is as follows. Blocks voltage-gated potassium channels (Kv). This is the slowly inactivating phase of potassium efflux which is blocked by this toxin. The protein is Dendrotoxin B of Dendroaspis angusticeps (Eastern green mamba).